We begin with the raw amino-acid sequence, 478 residues long: Transposase for insertion sequence element IS231E (478 aa).

It belongs to the transposase 11 family.

Its function is as follows. Involved in the transposition of the insertion sequence. The polypeptide is Transposase for insertion sequence element IS231E (Bacillus thuringiensis subsp. finitimus).